The sequence spans 199 residues: Recombination protein RecR (199 aa).

The segment at 58-73 adopts a C4-type zinc-finger fold; it reads CRRCFNLTEGEECDIC. One can recognise a Toprim domain in the interval 81-176; that stretch reads SVICVVEDPY…RVTALASGLP (96 aa).

It belongs to the RecR family.

Functionally, may play a role in DNA repair. It seems to be involved in an RecBC-independent recombinational process of DNA repair. It may act with RecF and RecO. The polypeptide is Recombination protein RecR (Rubrobacter xylanophilus (strain DSM 9941 / JCM 11954 / NBRC 16129 / PRD-1)).